A 586-amino-acid chain; its full sequence is Estrogen receptor (586 aa).

The tract at residues M1–Y179 is modulating. A disordered region spans residues F144 to S173. The segment covering S149–M160 has biased composition (basic and acidic residues). 2 NR C4-type zinc fingers span residues C180–C200 and C216–C240. Positions C180–M245 form a DNA-binding region, nuclear receptor. Residues M246–L302 are hinge. Basic residues predominate over residues K252–R264. The tract at residues K252–D276 is disordered. Residues Q265–D276 are compositionally biased toward basic and acidic residues. The region spanning T303 to H539 is the NR LBD domain. The segment covering T543–R556 has biased composition (basic and acidic residues). Residues T543–C569 are disordered.

It belongs to the nuclear hormone receptor family. NR3 subfamily. As to quaternary structure, binds DNA as a homodimer. Can form a heterodimer with ER-beta.

Its subcellular location is the nucleus. In terms of biological role, the steroid hormones and their receptors are involved in the regulation of eukaryotic gene expression and affect cellular proliferation and differentiation in target tissues. This Xenopus laevis (African clawed frog) protein is Estrogen receptor (esr1).